The chain runs to 275 residues: Formamidopyrimidine-DNA glycosylase (275 aa).

The active-site Schiff-base intermediate with DNA is the proline 2. The Proton donor role is filled by glutamate 3. Lysine 58 functions as the Proton donor; for beta-elimination activity in the catalytic mechanism. DNA-binding residues include histidine 92, arginine 111, and arginine 154. The FPG-type zinc-finger motif lies at 239-273 (HVYHRQGLPCQRCGTPIERIKVAQRGTHFCPHCQV). Arginine 263 (proton donor; for delta-elimination activity) is an active-site residue.

The protein belongs to the FPG family. Monomer. It depends on Zn(2+) as a cofactor.

The enzyme catalyses Hydrolysis of DNA containing ring-opened 7-methylguanine residues, releasing 2,6-diamino-4-hydroxy-5-(N-methyl)formamidopyrimidine.. It catalyses the reaction 2'-deoxyribonucleotide-(2'-deoxyribose 5'-phosphate)-2'-deoxyribonucleotide-DNA = a 3'-end 2'-deoxyribonucleotide-(2,3-dehydro-2,3-deoxyribose 5'-phosphate)-DNA + a 5'-end 5'-phospho-2'-deoxyribonucleoside-DNA + H(+). In terms of biological role, involved in base excision repair of DNA damaged by oxidation or by mutagenic agents. Acts as a DNA glycosylase that recognizes and removes damaged bases. Has a preference for oxidized purines, such as 7,8-dihydro-8-oxoguanine (8-oxoG). Has AP (apurinic/apyrimidinic) lyase activity and introduces nicks in the DNA strand. Cleaves the DNA backbone by beta-delta elimination to generate a single-strand break at the site of the removed base with both 3'- and 5'-phosphates. This is Formamidopyrimidine-DNA glycosylase from Pediococcus pentosaceus (strain ATCC 25745 / CCUG 21536 / LMG 10740 / 183-1w).